A 251-amino-acid chain; its full sequence is Transcriptional cofactor Bfc (251 aa).

In terms of assembly, interacts with srp (via GATA-type Zn-finger domain); this interaction enhances srp binding to the promoter of crq/croquemort.

The protein resides in the nucleus. Transcriptional cofactor involved in efferocytosis. Together with srp mediates expression of the phagocytic receptor crq/croquemort in response to apoptotic cells, and is up-regulated by crq/croquemort in a positive feedback mechanism. Involved in macrophage engulfment and clearance of apoptotic cells during embryogenesis. The chain is Transcriptional cofactor Bfc from Drosophila melanogaster (Fruit fly).